The sequence spans 318 residues: Probable cell division protein WhiA (318 aa).

The H-T-H motif DNA-binding region spans 276–310 (TLQELGEMVESGSISKSGINHRLRKIDQIADKIRN).

It belongs to the WhiA family.

Functionally, involved in cell division and chromosome segregation. This Exiguobacterium sibiricum (strain DSM 17290 / CCUG 55495 / CIP 109462 / JCM 13490 / 255-15) protein is Probable cell division protein WhiA.